The following is a 207-amino-acid chain: Urease accessory protein UreG (207 aa).

14–21 contacts GTP; that stretch reads GPVGSGKT.

It belongs to the SIMIBI class G3E GTPase family. UreG subfamily. As to quaternary structure, homodimer. UreD, UreF and UreG form a complex that acts as a GTP-hydrolysis-dependent molecular chaperone, activating the urease apoprotein by helping to assemble the nickel containing metallocenter of UreC. The UreE protein probably delivers the nickel.

Its subcellular location is the cytoplasm. Its function is as follows. Facilitates the functional incorporation of the urease nickel metallocenter. This process requires GTP hydrolysis, probably effectuated by UreG. The polypeptide is Urease accessory protein UreG (Chelativorans sp. (strain BNC1)).